A 397-amino-acid polypeptide reads, in one-letter code: Teichoic acid D-alanine hydrolase (397 aa).

An N-terminal signal peptide occupies residues M1–H27.

It localises to the cell membrane. It carries out the reaction [(4-D-Ala)-(2-GlcNAc)-Rib-ol-P]n-[Gro-P]m-beta-D-ManNAc-(1-&gt;4)-alpha-D-GlcNAc-P-peptidoglycan + n H2O = [(2-GlcNAc)-Rib-ol-P]n-[Gro-P]m-beta-D-ManNAc-(1-&gt;4)-alpha-D-GlcNAc-P-peptidoglycan + n D-alanine.. Functionally, catalyzes the liberation of D-alanyl moieties present on wall teichoic acid (WTA) and lipoteichoic acid (LTA). Affects the methicillin resistance level and autolysis in the presence of Triton X-100 as well as the cell wall structure. This is Teichoic acid D-alanine hydrolase (fmtA) from Staphylococcus aureus (strain MRSA252).